The following is a 405-amino-acid chain: Probable tRNA sulfurtransferase (405 aa).

The region spanning 60–165 (QEVSASLKKI…PDAAYISHEE (106 aa)) is the THUMP domain. ATP-binding positions include 183-184 (ML), 208-209 (HF), Arg-265, Gly-287, and Gln-296.

The protein belongs to the ThiI family.

Its subcellular location is the cytoplasm. The enzyme catalyses [ThiI sulfur-carrier protein]-S-sulfanyl-L-cysteine + a uridine in tRNA + 2 reduced [2Fe-2S]-[ferredoxin] + ATP + H(+) = [ThiI sulfur-carrier protein]-L-cysteine + a 4-thiouridine in tRNA + 2 oxidized [2Fe-2S]-[ferredoxin] + AMP + diphosphate. It catalyses the reaction [ThiS sulfur-carrier protein]-C-terminal Gly-Gly-AMP + S-sulfanyl-L-cysteinyl-[cysteine desulfurase] + AH2 = [ThiS sulfur-carrier protein]-C-terminal-Gly-aminoethanethioate + L-cysteinyl-[cysteine desulfurase] + A + AMP + 2 H(+). It participates in cofactor biosynthesis; thiamine diphosphate biosynthesis. In terms of biological role, catalyzes the ATP-dependent transfer of a sulfur to tRNA to produce 4-thiouridine in position 8 of tRNAs, which functions as a near-UV photosensor. Also catalyzes the transfer of sulfur to the sulfur carrier protein ThiS, forming ThiS-thiocarboxylate. This is a step in the synthesis of thiazole, in the thiamine biosynthesis pathway. The sulfur is donated as persulfide by IscS. The chain is Probable tRNA sulfurtransferase from Streptococcus suis (strain 98HAH33).